Here is a 32-residue protein sequence, read N- to C-terminus: Photosystem I reaction center subunit XII (32 aa).

Residues V10 to G27 form a helical membrane-spanning segment.

The protein belongs to the PsaM family.

The protein localises to the plastid. It localises to the chloroplast thylakoid membrane. The sequence is that of Photosystem I reaction center subunit XII from Zygnema circumcarinatum (Green alga).